Reading from the N-terminus, the 374-residue chain is Palmitoyltransferase PFA5 (374 aa).

The Cytoplasmic portion of the chain corresponds to 1–13 (MALSWNIRIRRRS). The helical transmembrane segment at 14 to 34 (WFRFILPIIVLGLLCYGTWAY) threads the bilayer. Residues 35–55 (CHKLCYEQVDKRLRQKSVSVG) lie on the Lumenal side of the membrane. The helical transmembrane segment at 56–76 (LICAVCFLDVVVIFIWLQIVI) threads the bilayer. Topologically, residues 77–173 (LVGPGTQPHV…TVIGRDNYRL (97 aa)) are cytoplasmic. In terms of domain architecture, DHHC spans 129-179 (IWCSECQSLKMERTHHSSELGHCIPRFDHYCMWIGTVIGRDNYRLFVQFAA). Residues 174-194 (FVQFAAYFSTLLLIMWVSICV) form a helical membrane-spanning segment. The Lumenal segment spans residues 195–217 (YIRIITQHNHNYSPNLNANIIST). Residues 218–238 (LVFAILGWLLTASLLASSIFY) form a helical membrane-spanning segment. Topologically, residues 239 to 374 (MSQNKTSLEA…ASGDDSDPAY (136 aa)) are cytoplasmic.

This sequence belongs to the DHHC palmitoyltransferase family. PFA5 subfamily. Post-translationally, autopalmitoylated.

Its subcellular location is the membrane. It catalyses the reaction L-cysteinyl-[protein] + hexadecanoyl-CoA = S-hexadecanoyl-L-cysteinyl-[protein] + CoA. This chain is Palmitoyltransferase PFA5 (PFA5), found in Saccharomyces cerevisiae (strain ATCC 204508 / S288c) (Baker's yeast).